The chain runs to 714 residues: Fatty acid oxidation complex subunit alpha (714 aa).

The enoyl-CoA hydratase stretch occupies residues 1 to 190 (MEMASAFTLN…KLGLVDDVVP (190 aa)). A 3-hydroxyacyl-CoA dehydrogenase region spans residues 306-714 (APLNSVGILG…FWKTTATDLQ (409 aa)).

This sequence in the N-terminal section; belongs to the enoyl-CoA hydratase/isomerase family. In the central section; belongs to the 3-hydroxyacyl-CoA dehydrogenase family. Heterotetramer of two alpha chains (FadJ) and two beta chains (FadI).

It localises to the cytoplasm. The enzyme catalyses a (3S)-3-hydroxyacyl-CoA = a (2E)-enoyl-CoA + H2O. It catalyses the reaction a 4-saturated-(3S)-3-hydroxyacyl-CoA = a (3E)-enoyl-CoA + H2O. It carries out the reaction a (3S)-3-hydroxyacyl-CoA + NAD(+) = a 3-oxoacyl-CoA + NADH + H(+). The catalysed reaction is (3S)-3-hydroxybutanoyl-CoA = (3R)-3-hydroxybutanoyl-CoA. Its pathway is lipid metabolism; fatty acid beta-oxidation. Functionally, catalyzes the formation of a hydroxyacyl-CoA by addition of water on enoyl-CoA. Also exhibits 3-hydroxyacyl-CoA epimerase and 3-hydroxyacyl-CoA dehydrogenase activities. The chain is Fatty acid oxidation complex subunit alpha from Escherichia coli (strain ATCC 8739 / DSM 1576 / NBRC 3972 / NCIMB 8545 / WDCM 00012 / Crooks).